A 233-amino-acid chain; its full sequence is Biosynthetic peptidoglycan transglycosylase (233 aa).

The chain crosses the membrane as a helical span at residues L8 to I28.

Belongs to the glycosyltransferase 51 family.

The protein localises to the cell inner membrane. It carries out the reaction [GlcNAc-(1-&gt;4)-Mur2Ac(oyl-L-Ala-gamma-D-Glu-L-Lys-D-Ala-D-Ala)](n)-di-trans,octa-cis-undecaprenyl diphosphate + beta-D-GlcNAc-(1-&gt;4)-Mur2Ac(oyl-L-Ala-gamma-D-Glu-L-Lys-D-Ala-D-Ala)-di-trans,octa-cis-undecaprenyl diphosphate = [GlcNAc-(1-&gt;4)-Mur2Ac(oyl-L-Ala-gamma-D-Glu-L-Lys-D-Ala-D-Ala)](n+1)-di-trans,octa-cis-undecaprenyl diphosphate + di-trans,octa-cis-undecaprenyl diphosphate + H(+). It functions in the pathway cell wall biogenesis; peptidoglycan biosynthesis. In terms of biological role, peptidoglycan polymerase that catalyzes glycan chain elongation from lipid-linked precursors. In Neisseria gonorrhoeae (strain ATCC 700825 / FA 1090), this protein is Biosynthetic peptidoglycan transglycosylase.